We begin with the raw amino-acid sequence, 688 residues long: Glycine--tRNA ligase beta subunit (688 aa).

The protein belongs to the class-II aminoacyl-tRNA synthetase family. In terms of assembly, tetramer of two alpha and two beta subunits.

Its subcellular location is the cytoplasm. The enzyme catalyses tRNA(Gly) + glycine + ATP = glycyl-tRNA(Gly) + AMP + diphosphate. In Psychromonas ingrahamii (strain DSM 17664 / CCUG 51855 / 37), this protein is Glycine--tRNA ligase beta subunit.